The sequence spans 650 residues: Putative secretin GspD (650 aa).

An N-terminal signal peptide occupies residues methionine 1–alanine 23. The interval glutamate 24–glycine 122 is N0. An N1 region spans residues glutamate 124–glycine 188. The tract at residues threonine 189–serine 263 is N2. Positions glycine 266–aspartate 342 are N3. The interval arginine 345 to aspartate 596 is secretin. The s domain stretch occupies residues aspartate 598–arginine 650.

This sequence belongs to the bacterial secretin family. GSP D subfamily. In terms of assembly, forms a cylindrical channel with 15 subunits; approximately 25% of the particles have 16-subunit channels. Closed pentadeacameric channels are 180 Angstroms long and 145 Angstroms in diameter. Each subunit turns in a clock-wise manner around the channel.

The protein localises to the cell outer membrane. In terms of biological role, involved in a type II secretion system (T2SS, formerly general secretion pathway, GSP) for the export of folded proteins across the outer membrane. This subunit would form the outer membrane channel. This is Putative secretin GspD (gspD) from Escherichia coli (strain K12).